A 272-amino-acid chain; its full sequence is U11/U12 small nuclear ribonucleoprotein 35 kDa protein (272 aa).

The region spanning 51–129 is the RRM domain; sequence LTLFVSRLSP…REVFVDFELE (79 aa). Basic and acidic residues-rich tracts occupy residues 146-162 and 190-272; these read GKKESGQLRFGGRDRPF and RDRS…EHNR. Positions 146–272 are disordered; the sequence is GKKESGQLRF…RKHRSDEHNR (127 aa). The stretch at 221-258 forms a coiled coil; the sequence is TKDDKEQNAEHTKRERSREQAKNDKDKEKKDSKRERSR.

It is found in the nucleus. The chain is U11/U12 small nuclear ribonucleoprotein 35 kDa protein (snrnp35) from Xenopus laevis (African clawed frog).